The sequence spans 126 residues: Small ribosomal subunit protein uS13 (126 aa).

Positions 92 to 126 (HRRGLPANGQRTHTNARTRKGPRKGMLQRRPAATK) are disordered. Over residues 105 to 118 (TNARTRKGPRKGML) the composition is skewed to basic residues.

This sequence belongs to the universal ribosomal protein uS13 family. Part of the 30S ribosomal subunit. Forms a loose heterodimer with protein S19. Forms two bridges to the 50S subunit in the 70S ribosome.

In terms of biological role, located at the top of the head of the 30S subunit, it contacts several helices of the 16S rRNA. In the 70S ribosome it contacts the 23S rRNA (bridge B1a) and protein L5 of the 50S subunit (bridge B1b), connecting the 2 subunits; these bridges are implicated in subunit movement. Contacts the tRNAs in the A and P-sites. This Sorangium cellulosum (strain So ce56) (Polyangium cellulosum (strain So ce56)) protein is Small ribosomal subunit protein uS13.